The following is a 785-amino-acid chain: DNA ligase (785 aa).

Residues D32–D36, S81–L82, and E121 each bind NAD(+). Residue K123 is the N6-AMP-lysine intermediate of the active site. Residues R144, E181, K294, and K318 each contribute to the NAD(+) site. 4 residues coordinate Zn(2+): C412, C415, C442, and C448. Positions V702–V785 constitute a BRCT domain.

The protein belongs to the NAD-dependent DNA ligase family. LigA subfamily. Mg(2+) serves as cofactor. Requires Mn(2+) as cofactor.

It catalyses the reaction NAD(+) + (deoxyribonucleotide)n-3'-hydroxyl + 5'-phospho-(deoxyribonucleotide)m = (deoxyribonucleotide)n+m + AMP + beta-nicotinamide D-nucleotide.. DNA ligase that catalyzes the formation of phosphodiester linkages between 5'-phosphoryl and 3'-hydroxyl groups in double-stranded DNA using NAD as a coenzyme and as the energy source for the reaction. It is essential for DNA replication and repair of damaged DNA. This chain is DNA ligase, found in Pseudomonas fluorescens (strain SBW25).